The chain runs to 430 residues: GTPase Obg (430 aa).

Positions 1–158 constitute an Obg domain; it reads MFIDTAKVFV…LNIVLELKLL (158 aa). Residues 159 to 331 form the OBG-type G domain; it reads ADVGLLGFPN…VMKEAARILK (173 aa). GTP contacts are provided by residues 165 to 172, 190 to 194, 212 to 215, 282 to 285, and 312 to 314; these read GFPNVGKS, FTTLK, DIPG, NKSD, and SAA. Positions 172 and 192 each coordinate Mg(2+). Positions 345-430 constitute an OCT domain; the sequence is MYIPEEKRFT…LNDFEFEYIL (86 aa).

The protein belongs to the TRAFAC class OBG-HflX-like GTPase superfamily. OBG GTPase family. As to quaternary structure, monomer. Mg(2+) serves as cofactor.

The protein localises to the cytoplasm. Functionally, an essential GTPase which binds GTP, GDP and possibly (p)ppGpp with moderate affinity, with high nucleotide exchange rates and a fairly low GTP hydrolysis rate. Plays a role in control of the cell cycle, stress response, ribosome biogenesis and in those bacteria that undergo differentiation, in morphogenesis control. This is GTPase Obg from Clostridium beijerinckii (strain ATCC 51743 / NCIMB 8052) (Clostridium acetobutylicum).